A 21-amino-acid chain; its full sequence is Chlorophyllase type 2 (21 aa).

The protein belongs to the AB hydrolase superfamily. Lipase family.

The enzyme catalyses a chlorophyll + H2O = a chlorophyllide + phytol + H(+). It participates in porphyrin-containing compound metabolism; chlorophyll degradation. Catalyzes the hydrolysis of ester bond in chlorophyll to yield chlorophyllide and phytol. The chain is Chlorophyllase type 2 from Chenopodium album (Fat hen).